Here is an 820-residue protein sequence, read N- to C-terminus: Inhibitor of nuclear factor kappa-B kinase epsilon subunit homolog 1 (820 aa).

A Protein kinase domain is found at leucine 21–threonine 299. Residues isoleucine 27 to valine 35 and lysine 49 each bind ATP. The Proton acceptor role is filled by aspartate 149. Residues serine 758 to asparagine 798 form a disordered region.

The protein belongs to the protein kinase superfamily. Ser/Thr protein kinase family. As to quaternary structure, interacts with allo-1 (via N-terminus); the interaction is direct. In terms of tissue distribution, expressed in oocytes.

The protein localises to the cytoplasm. It catalyses the reaction L-seryl-[protein] + ATP = O-phospho-L-seryl-[protein] + ADP + H(+). It carries out the reaction L-threonyl-[protein] + ATP = O-phospho-L-threonyl-[protein] + ADP + H(+). Serine/threonine-protein kinase, which plays a role in regulating allophagy, an autophagic process in which paternal organelles, including mitochondria and membranous organelles, are degraded in embryos. Phosphorylates the allophagy receptor allo-1, which is required for allophagy. The sequence is that of Inhibitor of nuclear factor kappa-B kinase epsilon subunit homolog 1 from Caenorhabditis elegans.